A 347-amino-acid polypeptide reads, in one-letter code: Protein RecA (347 aa).

65–72 (GPESSGKT) lines the ATP pocket.

This sequence belongs to the RecA family.

It is found in the cytoplasm. Its function is as follows. Can catalyze the hydrolysis of ATP in the presence of single-stranded DNA, the ATP-dependent uptake of single-stranded DNA by duplex DNA, and the ATP-dependent hybridization of homologous single-stranded DNAs. It interacts with LexA causing its activation and leading to its autocatalytic cleavage. This is Protein RecA from Stutzerimonas stutzeri (Pseudomonas stutzeri).